The primary structure comprises 236 residues: Putative protein ZBED10P (236 aa).

The sequence is that of Putative protein ZBED10P from Homo sapiens (Human).